Reading from the N-terminus, the 275-residue chain is Dermonecrotic toxin SpaSicTox-betaIIA1 (275 aa).

Residue histidine 5 is part of the active site. The Mg(2+) site is built by glutamate 25 and aspartate 27. Residue histidine 41 is the Nucleophile of the active site. 2 cysteine pairs are disulfide-bonded: cysteine 45-cysteine 51 and cysteine 47-cysteine 190. Mg(2+) is bound at residue aspartate 85.

The protein belongs to the arthropod phospholipase D family. Class II subfamily. Mg(2+) is required as a cofactor. In terms of tissue distribution, expressed by the venom gland.

It localises to the secreted. The catalysed reaction is an N-(acyl)-sphingosylphosphocholine = an N-(acyl)-sphingosyl-1,3-cyclic phosphate + choline. It carries out the reaction an N-(acyl)-sphingosylphosphoethanolamine = an N-(acyl)-sphingosyl-1,3-cyclic phosphate + ethanolamine. The enzyme catalyses a 1-acyl-sn-glycero-3-phosphocholine = a 1-acyl-sn-glycero-2,3-cyclic phosphate + choline. It catalyses the reaction a 1-acyl-sn-glycero-3-phosphoethanolamine = a 1-acyl-sn-glycero-2,3-cyclic phosphate + ethanolamine. Functionally, dermonecrotic toxins cleave the phosphodiester linkage between the phosphate and headgroup of certain phospholipids (sphingolipid and lysolipid substrates), forming an alcohol (often choline) and a cyclic phosphate. This toxin acts on sphingomyelin (SM). It may also act on ceramide phosphoethanolamine (CPE), lysophosphatidylcholine (LPC) and lysophosphatidylethanolamine (LPE), but not on lysophosphatidylserine (LPS), and lysophosphatidylglycerol (LPG). It acts by transphosphatidylation, releasing exclusively cyclic phosphate products as second products. Induces dermonecrosis, hemolysis, increased vascular permeability, edema, inflammatory response, and platelet aggregation. This is Dermonecrotic toxin SpaSicTox-betaIIA1 from Sicarius patagonicus (Six-eyed sand spider).